The sequence spans 400 residues: Tektin-B1 (400 aa).

Coiled-coil stretches lie at residues 35-81, 236-294, and 310-353; these read TRLS…AKAL, FALR…LENR, and GLVN…LELK.

This sequence belongs to the tektin family. As to quaternary structure, may form a heterodimer with tektin a or exist as a homodimer. As to expression, cilia and flagella.

It localises to the cytoplasm. The protein localises to the cytoskeleton. Its function is as follows. Structural component of ciliary and flagellar microtubules. This chain is Tektin-B1, found in Strongylocentrotus purpuratus (Purple sea urchin).